Here is a 357-residue protein sequence, read N- to C-terminus: 3-isopropylmalate dehydrogenase (357 aa).

Positions 97, 107, 135, and 224 each coordinate substrate. 3 residues coordinate Mg(2+): Asp-224, Asp-248, and Asp-252. 282–294 (GSAPDIAGKNIAN) is a binding site for NAD(+).

It belongs to the isocitrate and isopropylmalate dehydrogenases family. LeuB type 1 subfamily. As to quaternary structure, homodimer. The cofactor is Mg(2+). It depends on Mn(2+) as a cofactor.

It localises to the cytoplasm. It carries out the reaction (2R,3S)-3-isopropylmalate + NAD(+) = 4-methyl-2-oxopentanoate + CO2 + NADH. It functions in the pathway amino-acid biosynthesis; L-leucine biosynthesis; L-leucine from 3-methyl-2-oxobutanoate: step 3/4. In terms of biological role, catalyzes the oxidation of 3-carboxy-2-hydroxy-4-methylpentanoate (3-isopropylmalate) to 3-carboxy-4-methyl-2-oxopentanoate. The product decarboxylates to 4-methyl-2 oxopentanoate. The chain is 3-isopropylmalate dehydrogenase from Prochlorococcus marinus (strain MIT 9312).